A 238-amino-acid chain; its full sequence is Ribitol-5-phosphate cytidylyltransferase 1 (238 aa).

Residues 7–10 and 81–87 each bind CTP; these read LAGG and GSDRNDT.

It belongs to the IspD/TarI cytidylyltransferase family. TarI subfamily.

The enzyme catalyses D-ribitol 5-phosphate + CTP + H(+) = CDP-L-ribitol + diphosphate. It participates in cell wall biogenesis; poly(ribitol phosphate) teichoic acid biosynthesis. Catalyzes the transfer of the cytidylyl group of CTP to D-ribitol 5-phosphate. This Staphylococcus aureus (strain bovine RF122 / ET3-1) protein is Ribitol-5-phosphate cytidylyltransferase 1.